Reading from the N-terminus, the 1118-residue chain is MKKSVRPAVSRASGERGKPEVAGTTGTGKPVSKSSTAAPLSKVKSSDDLLAAMAGGNPTSSNAVAKTKRTASVGTTASTLDKPKTTSGTTSKRLTSSVTKETNLTRDRLRTSRASANKKQSAAGTVVGDAASGKRSRSQVLVESESRMSKSKSDGQISDKVALEAKVKDLLGLAKSKDVEILHLRSELRDMRVQLGLGGKELQEGPEEEEEEEEEEKPHVSAITAADVESTLILLQEQNQAIREELNLLKSENRMLKDRLNALGFSLEQRLDGSDKLFSYASLSPDLAAGSGQSDGGGTGTLTSSVEGSAPGSLEDLLAGHQHGGSADNLDSESSEVYQAVTSSDDALDAPSGASSSSESECAPSRERSRRGSSGNASEVSVACLTERIHQMEENQHSTAEELQATLQELADLQQITQELNGENERLGEEKVILMDSLCQQSDKLELYGRQIEYLRSLLDEHHVSYVLEEDIKSGRYMELEQRYADLAENARFEREQLLGVQQHLSNTLKMAEQDNAEAQEMIGALKERNHQMERIMESERQGRAAVEAALHEYKDAVSSEQAELSRCRAQLDQERQRVAELYSLHTAGDKNDICQLLEGVRLGKEEAEAKAAKLQEGLEQAHSDLGHLQETFSKLDREYREFREQAQRQLSEQERALEKQRMDLQEKETEIADMKETIFELEDEVEQHRALKLHDNLIITDLENSVKKLQDQKHDMEREIKILHRRLREESMEWRQFQADLQTAVVIANDIKSEAQEEIGDLRRRLQEAQEKNEKLSKELEEVKSRKQDEERGRVYNYMNAVERDLAALRQGMGLSRRSSTSSEPSPTVKTLIKSFDSASQGPPSNGASVTPTVSAAPLPRTPLSPSPMKTPPAAAVSPIQRHSISGSMSAAKPLSSLGDKRPTYTDITIPTEHLLRGSAASRPPSALQRVSNMDSTKTISVSRRSSEEMKRDMSASEGASSTSLMAMSAASAPLSLSSSSPTASVTPTTRSRLREERKDPLSALAREYGGSKRNALLKWCQKKTEGYQNIDITNFSSSWNDGLAFCAVLHTYLPAHIPYQELTSQEKRRNFTLAFQAAESVGIKCTLDINDMVHTERPDWQSVMTYVTAIYKYFET.

Disordered regions lie at residues 1 to 157 (MKKS…DGQI) and 198 to 221 (GGKELQEGPEEEEEEEEEEKPHVS). Composition is skewed to polar residues over residues 57-102 (NPTS…TKET) and 112-123 (SRASANKKQSAA). Over residues 144–153 (SESRMSKSKS) the composition is skewed to basic and acidic residues. The span at 204–215 (EGPEEEEEEEEE) shows a compositional bias: acidic residues. Residues 225–264 (AADVESTLILLQEQNQAIREELNLLKSENRMLKDRLNALG) adopt a coiled-coil conformation. The tract at residues 289-379 (AGSGQSDGGG…RRGSSGNASE (91 aa)) is disordered. A compositionally biased stretch (low complexity) spans 343–363 (SSDDALDAPSGASSSSESECA). Coiled coils occupy residues 384 to 438 (CLTE…MDSL) and 475 to 796 (GRYM…RGRV). Disordered regions lie at residues 771–790 (QEKNEKLSKELEEVKSRKQD), 837–876 (FDSASQGPPSNGASVTPTVSAAPLPRTPLSPSPMKTPPAA), and 920–1001 (SAAS…ERKD). Positions 838 to 855 (DSASQGPPSNGASVTPTV) are enriched in polar residues. Residues 861-872 (PRTPLSPSPMKT) are compositionally biased toward pro residues. Residues 930–945 (QRVSNMDSTKTISVSR) show a composition bias toward polar residues. Residues 946 to 956 (RSSEEMKRDMS) show a composition bias toward basic and acidic residues. The segment covering 961–986 (ASSTSLMAMSAASAPLSLSSSSPTAS) has biased composition (low complexity). The 106-residue stretch at 1012 to 1117 (GSKRNALLKW…YVTAIYKYFE (106 aa)) folds into the Calponin-homology (CH) domain.

This sequence belongs to the cytospin-A family. In terms of assembly, may interact with both microtubules and actin cytoskeleton.

It localises to the cytoplasm. The protein resides in the cytoskeleton. The protein localises to the spindle. Its subcellular location is the cell junction. It is found in the gap junction. Its function is as follows. Involved in cytokinesis and spindle organization. May play a role in actin cytoskeleton organization and microtubule stabilization and hence required for proper cell adhesion and migration. The polypeptide is Cytospin-A (specc1l) (Takifugu rubripes (Japanese pufferfish)).